The primary structure comprises 162 residues: Phosphopantetheine adenylyltransferase (162 aa).

Residue threonine 9 participates in substrate binding. ATP is bound by residues 9–10 (TF) and histidine 17. Residues lysine 41, leucine 73, and arginine 87 each contribute to the substrate site. ATP-binding positions include 88–90 (GLR), glutamate 98, and 123–129 (LSYISSS).

Belongs to the bacterial CoaD family. In terms of assembly, homohexamer. Mg(2+) is required as a cofactor.

The protein localises to the cytoplasm. The enzyme catalyses (R)-4'-phosphopantetheine + ATP + H(+) = 3'-dephospho-CoA + diphosphate. It functions in the pathway cofactor biosynthesis; coenzyme A biosynthesis; CoA from (R)-pantothenate: step 4/5. Its function is as follows. Reversibly transfers an adenylyl group from ATP to 4'-phosphopantetheine, yielding dephospho-CoA (dPCoA) and pyrophosphate. The polypeptide is Phosphopantetheine adenylyltransferase (Teredinibacter turnerae (strain ATCC 39867 / T7901)).